The primary structure comprises 427 residues: Adenylosuccinate synthetase (427 aa).

GTP contacts are provided by residues 12–18 and 40–42; these read GDEGKGK and GHT. Residue D13 is the Proton acceptor of the active site. Mg(2+) contacts are provided by D13 and G40. IMP-binding positions include 13-16, 38-41, T128, R142, Q223, T238, and R302; these read DEGK and NAGH. Catalysis depends on H41, which acts as the Proton donor. 298 to 304 serves as a coordination point for substrate; sequence TTTGRPR. Residues R304, 330 to 332, and 412 to 414 each bind GTP; these read KLD and SVG.

It belongs to the adenylosuccinate synthetase family. In terms of assembly, homodimer. Mg(2+) is required as a cofactor.

It localises to the cytoplasm. The enzyme catalyses IMP + L-aspartate + GTP = N(6)-(1,2-dicarboxyethyl)-AMP + GDP + phosphate + 2 H(+). It participates in purine metabolism; AMP biosynthesis via de novo pathway; AMP from IMP: step 1/2. Its function is as follows. Plays an important role in the de novo pathway of purine nucleotide biosynthesis. Catalyzes the first committed step in the biosynthesis of AMP from IMP. The polypeptide is Adenylosuccinate synthetase (Carboxydothermus hydrogenoformans (strain ATCC BAA-161 / DSM 6008 / Z-2901)).